The primary structure comprises 258 residues: Type III pantothenate kinase (258 aa).

6–13 (DVGNSDTV) contributes to the ATP binding site. 108 to 111 (GSDR) serves as a coordination point for substrate. Asp110 (proton acceptor) is an active-site residue. A K(+)-binding site is contributed by Asp130. An ATP-binding site is contributed by Thr133. Thr185 lines the substrate pocket.

It belongs to the type III pantothenate kinase family. In terms of assembly, homodimer. The cofactor is NH4(+). K(+) is required as a cofactor.

It localises to the cytoplasm. It catalyses the reaction (R)-pantothenate + ATP = (R)-4'-phosphopantothenate + ADP + H(+). Its pathway is cofactor biosynthesis; coenzyme A biosynthesis; CoA from (R)-pantothenate: step 1/5. Functionally, catalyzes the phosphorylation of pantothenate (Pan), the first step in CoA biosynthesis. The chain is Type III pantothenate kinase from Thermobifida fusca (strain YX).